Here is a 41-residue protein sequence, read N- to C-terminus: Alpha-conotoxin-like Pu1.2 (41 aa).

Residues 1–21 (LDGRNAAADFETSDLLAMTIR) constitute a propeptide that is removed on maturation. 2 disulfides stabilise this stretch: Cys-24–Cys-30 and Cys-25–Cys-37. Cys-37 carries the post-translational modification Cysteine amide. The propeptide occupies 38–41 (GGKR).

This sequence belongs to the conotoxin A superfamily. Post-translationally, non-native isomers 'ribbon' (with disulfide connectivity C1-C4, C2-C3) and 'beads' (with disulfide connectivity C1-C2, C3-C4) also inhibit high voltage-activated (HVA) calcium channel currents in rat DRG neurons (25-30% inhibition at 1 uM toxin). Mutants Pu1.2(9-16), [C3S; C9S]Pu1.2 and [C4S]Pu1.2(1-9) are all C-terminally amidated. In terms of tissue distribution, expressed by the venom duct.

The protein localises to the secreted. Functionally, alpha-conotoxins act on postsynaptic membranes, they bind to the nicotinic acetylcholine receptors (nAChR) and thus inhibit them. This toxin also inhibits high voltage-activated (HVA) calcium channel currents in rat DRG neurons (27% inhibition at 1 uM toxin) probably by activating GABA(B) receptors (GABBR1 and/or GABBR2). The polypeptide is Alpha-conotoxin-like Pu1.2 (Conus pulicarius (Flea-bitten cone)).